Here is a 373-residue protein sequence, read N- to C-terminus: 3 beta-hydroxysteroid dehydrogenase/Delta 5--&gt;4-isomerase type 1 (373 aa).

Residues 10–15 (GAGGFL), Tyr155, and Lys159 contribute to the NADP(+) site. Lys159 functions as the Proton donor in the catalytic mechanism. Residues 288–308 (VALLYWLGFLLELVSFLLRPV) traverse the membrane as a helical segment.

The protein belongs to the 3-beta-HSD family. As to expression, high levels in adrenal gland, kidney and male liver. Low levels in female liver.

The protein localises to the endoplasmic reticulum membrane. The protein resides in the mitochondrion membrane. It catalyses the reaction a 3beta-hydroxy-Delta(5)-steroid + NAD(+) = a 3-oxo-Delta(5)-steroid + NADH + H(+). The enzyme catalyses pregnenolone + NAD(+) = pregn-5-ene-3,20-dione + NADH + H(+). The catalysed reaction is 3beta-hydroxyandrost-5-en-17-one + NAD(+) = androst-5-ene-3,17-dione + NADH + H(+). It carries out the reaction androst-5-en-3beta,17beta-diol + NAD(+) = 17beta-hydroxy-androst-5-en-3-one + NADH + H(+). It catalyses the reaction a 3beta-hydroxysteroid + NADP(+) = a 3-oxosteroid + NADPH + H(+). The enzyme catalyses 5alpha-androstane-3beta,17beta-diol + NADP(+) = 17beta-hydroxy-5alpha-androstan-3-one + NADPH + H(+). The catalysed reaction is 3beta-hydroxy-5alpha-androstan-17-one + NADP(+) = 5alpha-androstan-3,17-dione + NADPH + H(+). It carries out the reaction a 3-oxo-Delta(5)-steroid = a 3-oxo-Delta(4)-steroid. It catalyses the reaction pregn-5-ene-3,20-dione = progesterone. The enzyme catalyses androst-5-ene-3,17-dione = androst-4-ene-3,17-dione. The catalysed reaction is 17beta-hydroxy-androst-5-en-3-one = testosterone. It carries out the reaction 5alpha-androstane-3beta,17beta-diol + NAD(+) = 17beta-hydroxy-5alpha-androstan-3-one + NADH + H(+). Its pathway is steroid hormone biosynthesis. The protein operates within steroid metabolism. Functionally, a bifunctional enzyme responsible for the oxidation and isomerization of 3beta-hydroxy-Delta(5)-steroid precursors to 3-oxo-Delta(4)-steroids, an essential step in steroid hormone biosynthesis. Specifically catalyzes the conversion of pregnenolone to progesterone, 17alpha-hydroxypregnenolone to 17alpha-hydroxyprogesterone, dehydroepiandrosterone (DHEA) to 4-androstenedione, and androstenediol to testosterone. Additionally, catalyzes the interconversion between 3beta-hydroxy and 3-oxo-5alpha-androstane steroids controlling the bioavalability of the active forms. Specifically converts dihydrotestosterone to its inactive form 5alpha-androstanediol, that does not bind androgen receptor/AR. Also converts androstanedione, a precursor of testosterone and estrone, to epiandrosterone. Expected to use NAD(+) as preferred electron donor for the 3-beta-hydroxy-steroid dehydrogenase activity and NADPH for the 3-ketosteroid reductase activity. The protein is 3 beta-hydroxysteroid dehydrogenase/Delta 5--&gt;4-isomerase type 1 (HSD3B1) of Mesocricetus auratus (Golden hamster).